Here is a 333-residue protein sequence, read N- to C-terminus: Prenyltransferase stbC (333 aa).

Helical transmembrane passes span 74–94, 125–145, 147–164, 173–193, 201–221, 247–267, 272–292, and 304–324; these read VAFQAVLYIGWTFFMRGAGCA, ANIFGFAMVALAFACISPLPA, CQRLGLMTTVLSIIYPFC, VILGMTLAINFILAAYGAGLP, VPTICVTTAITLLVVFYDVVY, ILLTSITLVIAGLIATTGVLV, YFFVFSVAGLLAALLAMIGGI, and SGWFYALAIFNLLGGYLIEYL.

It belongs to the UbiA prenyltransferase family.

The protein resides in the membrane. It carries out the reaction orsellinate + (2E,6E)-farnesyl diphosphate = ilicicolinate B + diphosphate. It participates in secondary metabolite biosynthesis; terpenoid biosynthesis. Functionally, prenyltransferase; part of the cluster that mediates the biosynthesis of LL-Z1272-beta, also known as ilicicolin B, a prenylated aryl-aldehyde produced by several fungi and that serves as a key pathway intermediate for many fungal meroterpenoids. The first step in the pathway is performed by the non-reducing polyketide synthase stbA that produces orsellinic acid by condensing acetyl-CoA with 3 malonyl-CoA units. The prenyltransferase stbC then prenylates orsenilic acid into grifolic acid. Finally, grifolic acid is reduced to ilicicolin B by the NRPS-like protein stbB. The chain is Prenyltransferase stbC from Stachybotrys bisbyi (Hyalostachybotrys bisbyi).